Here is a 329-residue protein sequence, read N- to C-terminus: Sulfate-binding protein (329 aa).

Positions Met1 to Ala19 are cleaved as a signal peptide.

Belongs to the prokaryotic sulfate-binding protein family.

It localises to the periplasm. In terms of biological role, this protein specifically binds sulfate and is involved in its transmembrane transport. The protein is Sulfate-binding protein (sbp) of Salmonella typhimurium (strain LT2 / SGSC1412 / ATCC 700720).